The primary structure comprises 581 residues: Zinc finger protein 319 (581 aa).

Over residues 1 to 22 (MSESWQQPPQTQPQQPQAPQPQ) the composition is skewed to low complexity. The interval 1–39 (MSESWQQPPQTQPQQPQAPQPQHHAETPPALAEHTLPPG) is disordered. A C2H2-type 1 zinc finger spans residues 75 to 99 (PKCGVCGHDLAHLSSPHEHQCLAGH). The C2H2-type 2; degenerate zinc finger occupies 103–125 (FQCTQCLKIFHQATDLLEHQCVQ). A Glycyl lysine isopeptide (Lys-Gly) (interchain with G-Cter in SUMO2) cross-link involves residue lysine 129. 4 C2H2-type zinc fingers span residues 131 to 153 (FVCG…HSSH), 201 to 223 (YSCP…ERIH), 229 to 251 (YKCT…KRTH), and 257 to 279 (YKCA…MYAH). Serine 280 carries the phosphoserine modification. The C2H2-type 7; degenerate zinc-finger motif lies at 286–308 (FRCNVCELHFKESSELLQHPCTP). 3 C2H2-type zinc fingers span residues 314–336 (FRCG…ERTH), 342–364 (FKCD…RRTH), and 370–392 (FKCG…QHVH). A C2H2-type 11; degenerate zinc finger spans residues 398–420 (FKCPVCQKGFDQSAELLRHKCLP). Residues 427–449 (FKCPVCNKAYKRASALQKHQLSH) form a C2H2-type 12 zinc finger. A C2H2-type 13; degenerate zinc finger spans residues 457–479 (LRCTLCERRFFSSSEFVQHRCDP). C2H2-type zinc fingers lie at residues 485–507 (LKCP…RRVH), 513–535 (YKCP…QGVH), and 541–563 (FKCV…SAQH).

It belongs to the krueppel C2H2-type zinc-finger protein family.

It localises to the nucleus. Functionally, may be involved in transcriptional regulation. The polypeptide is Zinc finger protein 319 (Znf319) (Mus musculus (Mouse)).